The following is a 420-amino-acid chain: UDP-N-acetylglucosamine 1-carboxyvinyltransferase 1 (420 aa).

Position 22-23 (22-23 (KN)) interacts with phosphoenolpyruvate. Arg91 provides a ligand contact to UDP-N-acetyl-alpha-D-glucosamine. Cys115 acts as the Proton donor in catalysis. Cys115 is modified (2-(S-cysteinyl)pyruvic acid O-phosphothioketal). UDP-N-acetyl-alpha-D-glucosamine-binding positions include 120-124 (RPMDL), Asp303, and Val325.

Belongs to the EPSP synthase family. MurA subfamily.

It is found in the cytoplasm. It carries out the reaction phosphoenolpyruvate + UDP-N-acetyl-alpha-D-glucosamine = UDP-N-acetyl-3-O-(1-carboxyvinyl)-alpha-D-glucosamine + phosphate. Its pathway is cell wall biogenesis; peptidoglycan biosynthesis. Functionally, cell wall formation. Adds enolpyruvyl to UDP-N-acetylglucosamine. This is UDP-N-acetylglucosamine 1-carboxyvinyltransferase 1 from Carboxydothermus hydrogenoformans (strain ATCC BAA-161 / DSM 6008 / Z-2901).